The primary structure comprises 129 residues: Small ribosomal subunit protein uS11 (129 aa).

It belongs to the universal ribosomal protein uS11 family. In terms of assembly, part of the 30S ribosomal subunit. Interacts with proteins S7 and S18. Binds to IF-3.

Its function is as follows. Located on the platform of the 30S subunit, it bridges several disparate RNA helices of the 16S rRNA. Forms part of the Shine-Dalgarno cleft in the 70S ribosome. The sequence is that of Small ribosomal subunit protein uS11 from Limosilactobacillus fermentum (strain NBRC 3956 / LMG 18251) (Lactobacillus fermentum).